The primary structure comprises 196 residues: Transmembrane protein 52 (196 aa).

An N-terminal signal peptide occupies residues 1-28 (MAPGPSATQGILLLLPLLPLSQVTLGSA). A helical membrane pass occupies residues 47–67 (LWHVGLILLAILLMLLCGVTA). The tract at residues 162–196 (EEVAAPSEKTNSLPEALEPETTGGPQEPGPSAQRP) is disordered.

The protein localises to the membrane. The chain is Transmembrane protein 52 (Tmem52) from Mus musculus (Mouse).